The chain runs to 366 residues: Holliday junction branch migration complex subunit RuvB (366 aa).

Residues 1 to 48 (MIDRLMAREAIYQQSNPDPGGDPPEDGPPHGKNAADGGDEPDRGPDPD) form a disordered region. A large ATPase domain (RuvB-L) region spans residues 21-212 (GDPPEDGPPH…FQIREHLGWY (192 aa)). Residues Leu51, Arg52, Gly93, Lys96, Thr97, Thr98, 159–161 (EDF), Arg202, Tyr212, and Arg249 each bind ATP. Position 97 (Thr97) interacts with Mg(2+). The small ATPAse domain (RuvB-S) stretch occupies residues 213–283 (TRKELAEIVL…VCEAALDMIG (71 aa)). Residues 286-366 (HLGLDKQDRN…KRQMPDRPLS (81 aa)) form a head domain (RuvB-H) region. Residues Arg341, Arg343, and Arg346 each coordinate DNA.

The protein belongs to the RuvB family. Homohexamer. Forms an RuvA(8)-RuvB(12)-Holliday junction (HJ) complex. HJ DNA is sandwiched between 2 RuvA tetramers; dsDNA enters through RuvA and exits via RuvB. An RuvB hexamer assembles on each DNA strand where it exits the tetramer. Each RuvB hexamer is contacted by two RuvA subunits (via domain III) on 2 adjacent RuvB subunits; this complex drives branch migration. In the full resolvosome a probable DNA-RuvA(4)-RuvB(12)-RuvC(2) complex forms which resolves the HJ.

The protein resides in the cytoplasm. It carries out the reaction ATP + H2O = ADP + phosphate + H(+). Its function is as follows. The RuvA-RuvB-RuvC complex processes Holliday junction (HJ) DNA during genetic recombination and DNA repair, while the RuvA-RuvB complex plays an important role in the rescue of blocked DNA replication forks via replication fork reversal (RFR). RuvA specifically binds to HJ cruciform DNA, conferring on it an open structure. The RuvB hexamer acts as an ATP-dependent pump, pulling dsDNA into and through the RuvAB complex. RuvB forms 2 homohexamers on either side of HJ DNA bound by 1 or 2 RuvA tetramers; 4 subunits per hexamer contact DNA at a time. Coordinated motions by a converter formed by DNA-disengaged RuvB subunits stimulates ATP hydrolysis and nucleotide exchange. Immobilization of the converter enables RuvB to convert the ATP-contained energy into a lever motion, pulling 2 nucleotides of DNA out of the RuvA tetramer per ATP hydrolyzed, thus driving DNA branch migration. The RuvB motors rotate together with the DNA substrate, which together with the progressing nucleotide cycle form the mechanistic basis for DNA recombination by continuous HJ branch migration. Branch migration allows RuvC to scan DNA until it finds its consensus sequence, where it cleaves and resolves cruciform DNA. In Rhodopirellula baltica (strain DSM 10527 / NCIMB 13988 / SH1), this protein is Holliday junction branch migration complex subunit RuvB.